An 806-amino-acid chain; its full sequence is MASGADSKGDDLSTAILKQKNRPNRLIVDEAINEDNSVVSLSQPKMDELQLFRGDTVLLKGKKRREAVCIVLSDDTCSDEKIRMNRVVRNNLRVHLGDVISIQPCPDVKYGKRIHVLPIDDTVEGITGNLFEVYLKPYFLEAYRPIRKGDIFLVRGGMRAVEFKVVETDPSPYCIVAPDTVIHCEGEPIKREDEEESLNEVGYDDIGGCRKQLAQIKEMVELPLRHPALFKAIGVKPPRGILLYGPPGTGKTLIARAVANETGAFFFLINGPEIMSKLAGESESNLRKAFEEAEKNAPAIIFIDELDAIAPKREKTHGEVERRIVSQLLTLMDGLKQRAHVIVMAATNRPNSIDPALRRFGRFDREVDIGIPDATGRLEILQIHTKNMKLADDVDLEQVANETHGHVGADLAALCSEAALQAIRKKMDLIDLEDETIDAEVMNSLAVTMDDFRWALSQSNPSALRETVVEVPQVTWEDIGGLEDVKRELQELVQYPVEHPDKFLKFGMTPSKGVLFYGPPGCGKTLLAKAIANECQANFISIKGPELLTMWFGESEANVREIFDKARQAAPCVLFFDELDSIAKARGGNIGDGGGAADRVINQILTEMDGMSTKKNVFIIGATNRPDIIDPAILRPGRLDQLIYIPLPDEKSRVAILKANLRKSPVAKDVDLEFLAKMTNGFSGADLTEICQRACKLAIRESIESEIRRERERQTNPSAMEVEEDDPVPEIRRDHFEEAMRFARRSVSDNDIRKYEMFAQTLQQSRGFGSFRFPSGNQGGAGPSQGSGGGTGGNVYTEDNDDDLYG.

At A2 the chain carries N-acetylalanine. Phosphoserine occurs at positions 3 and 7. K8 participates in a covalent cross-link: Glycyl lysine isopeptide (Lys-Gly) (interchain with G-Cter in SUMO2). The residue at position 13 (S13) is a Phosphoserine. K18 participates in a covalent cross-link: Glycyl lysine isopeptide (Lys-Gly) (interchain with G-Cter in SUMO2). Phosphoserine is present on S37. 247-253 (PGTGKTL) provides a ligand contact to ATP. K315 is subject to N6,N6,N6-trimethyllysine; by VCPKMT. Positions 348 and 384 each coordinate ATP. The residue at position 436 (T436) is a Phosphothreonine. S462 bears the Phosphoserine mark. 2 positions are modified to N6-acetyllysine: K502 and K505. ATP is bound at residue 521–526 (GCGKTL). K668 is subject to N6-acetyllysine; alternate. K668 is modified (N6-succinyllysine; alternate). S702 carries the phosphoserine modification. A disordered region spans residues 708 to 727 (RRERERQTNPSAMEVEEDDP). K754 is subject to N6-acetyllysine. A disordered region spans residues 768–806 (FGSFRFPSGNQGGAGPSQGSGGGTGGNVYTEDNDDDLYG). Phosphoserine occurs at positions 770, 775, and 787. The segment covering 777–793 (NQGGAGPSQGSGGGTGG) has biased composition (gly residues). The segment at 797-806 (TEDNDDDLYG) is interaction with UBXN6. The short motif at 802–806 (DDLYG) is the PIM motif element. Y805 is modified (phosphotyrosine).

This sequence belongs to the AAA ATPase family. Homohexamer. Forms a ring-shaped particle of 12.5 nm diameter, that displays 6-fold radial symmetry. Part of a ternary complex containing STX5A, NSFL1C and VCP. NSFL1C forms a homotrimer that binds to one end of a VCP homohexamer. The complex binds to membranes enriched in phosphatidylethanolamine-containing lipids and promotes Golgi membrane fusion. Binds to a heterodimer of NPLOC4 and UFD1, binding to this heterodimer inhibits Golgi-membrane fusion. Interaction with VCIP135 leads to dissociation of the complex via ATP hydrolysis by VCP. Part of a ternary complex containing NPLOC4, UFD1 and VCP. Interacts with NSFL1C-like protein p37; the complex has membrane fusion activity and is required for Golgi and endoplasmic reticulum biogenesis. Interacts with SELENOS and SYVN1, as well as with DERL1 (via SHP-box motif), DERL2 and DERL3; which probably transfer misfolded proteins from the ER to VCP. Interacts with SVIP and DERL1. Component of a complex required to couple retrotranslocation, ubiquitination and deglycosylation composed of NGLY1, SAKS1, AMFR, VCP and RAD23B. Part of a complex composed of STUB1/CHIP, VCP/p97, CHRNA3, and UBXN2A that modulates the ubiquitination and endoplasmic reticulum-associated degradation (ERAD) of CHRNA3. Within the complex UBXN2A acts as a scaffold protein required for the interaction of CHRNA3 with VCP/p97, this interaction also inhibits CHRNA3 ubiquitination by STUB1/CHIP and subsequently ERAD. Interacts with UBXN2A (via UBX domain); the interaction is required for the interaction of CHRNA3 in the STUB1-VCP-UBXN2A complex. Directly interacts with UBXN4 and RNF19A. Interacts with CASR. Interacts with UBE4B and YOD1. Interacts with clathrin. Interacts with RNF103. Interacts with TRIM13 and TRIM21. Component of a VCP/p97-AMFR/gp78 complex that participates in the final step of the endoplasmic reticulum-associated degradation (ERAD) of HMGCR. Interacts directly with AMFR/gp78 (via its VIM). Interacts with RHBDD1 (via C-terminal domain). Interacts with SPRTN; leading to recruitment to stalled replication forks. Interacts with WASHC5. Interacts with UBOX5. Interacts (via N-terminus) with UBXN7, UBXN8, and probably several other UBX domain-containing proteins (via UBX domains); the interactions are mutually exclusive with VIM-dependent interactions such as those with AMFR and SELENOS. Forms a complex with UBQLN1 and UBXN4. Interacts (via the PIM motif) with RNF31 (via the PUB domain). Interacts with RIGI and RNF125; interaction takes place when RIGI is ubiquitinated via 'Lys-63'-linked ubiquitin on its CARD domains, leading to recruit RNF125 and promote ubiquitination and degradation of RIGI. Interacts with BAG6. Interacts with UBXN10. Interacts with UBXN6; the interaction with UBXN6 is direct and competitive with UFD1. Forms a ternary complex with CAV1 and UBXN6. Interacts with PLAA, UBXN6 and YOD1; may form a complex involved in macroautophagy. Interacts with ANKZF1. Interacts with ubiquitin-binding protein FAF1. Interacts with ZFAND2B (via VIM motif); the interaction is direct. Interacts with ZFAND1 (via its ubiquitin-like region); this interaction occurs in an arsenite-dependent manner. Interacts with CCDC47. Interacts with LMBR1L and UBAC2. Interacts with ATXN3. Interacts with TEX264; bridging VCP to covalent DNA-protein cross-links (DPCs). ISGylated. Post-translationally, methylation at Lys-315 catalyzed by VCPKMT is increased in the presence of ASPSCR1. Lys-315 methylation may decrease ATPase activity. In terms of processing, phosphorylated by tyrosine kinases in response to T-cell antigen receptor activation. Phosphorylated in mitotic cells.

It is found in the cytoplasm. It localises to the cytosol. Its subcellular location is the endoplasmic reticulum. The protein resides in the nucleus. The protein localises to the stress granule. It carries out the reaction ATP + H2O = ADP + phosphate + H(+). Functionally, necessary for the fragmentation of Golgi stacks during mitosis and for their reassembly after mitosis. Involved in the formation of the transitional endoplasmic reticulum (tER). The transfer of membranes from the endoplasmic reticulum to the Golgi apparatus occurs via 50-70 nm transition vesicles which derive from part-rough, part-smooth transitional elements of the endoplasmic reticulum (tER). Vesicle budding from the tER is an ATP-dependent process. The ternary complex containing UFD1, VCP and NPLOC4 binds ubiquitinated proteins and is necessary for the export of misfolded proteins from the ER to the cytoplasm, where they are degraded by the proteasome. The NPLOC4-UFD1-VCP complex regulates spindle disassembly at the end of mitosis and is necessary for the formation of a closed nuclear envelope. Regulates E3 ubiquitin-protein ligase activity of RNF19A. Component of the VCP/p97-AMFR/gp78 complex that participates in the final step of the sterol-mediated ubiquitination and endoplasmic reticulum-associated degradation (ERAD) of HMGCR. Mediates the endoplasmic reticulum-associated degradation of CHRNA3 in cortical neurons as part of the STUB1-VCP-UBXN2A complex. Involved in endoplasmic reticulum stress-induced pre-emptive quality control, a mechanism that selectively attenuates the translocation of newly synthesized proteins into the endoplasmic reticulum and reroutes them to the cytosol for proteasomal degradation. Involved in clearance process by mediating G3BP1 extraction from stress granules. Also involved in DNA damage response: recruited to double-strand breaks (DSBs) sites in a RNF8- and RNF168-dependent manner and promotes the recruitment of TP53BP1 at DNA damage sites. Recruited to stalled replication forks by SPRTN: may act by mediating extraction of DNA polymerase eta (POLH) to prevent excessive translesion DNA synthesis and limit the incidence of mutations induced by DNA damage. Together with SPRTN metalloprotease, involved in the repair of covalent DNA-protein cross-links (DPCs) during DNA synthesis. Involved in interstrand cross-link repair in response to replication stress by mediating unloading of the ubiquitinated CMG helicase complex. Mediates extraction of PARP1 trapped to chromatin: recognizes and binds ubiquitinated PARP1 and promotes its removal. Required for cytoplasmic retrotranslocation of stressed/damaged mitochondrial outer-membrane proteins and their subsequent proteasomal degradation. Essential for the maturation of ubiquitin-containing autophagosomes and the clearance of ubiquitinated protein by autophagy. Acts as a negative regulator of type I interferon production by interacting with RIGI: interaction takes place when RIGI is ubiquitinated via 'Lys-63'-linked ubiquitin on its CARD domains, leading to recruit RNF125 and promote ubiquitination and degradation of RIGI. May play a role in the ubiquitin-dependent sorting of membrane proteins to lysosomes where they undergo degradation. May more particularly play a role in caveolins sorting in cells. By controlling the steady-state expression of the IGF1R receptor, indirectly regulates the insulin-like growth factor receptor signaling pathway. The chain is Transitional endoplasmic reticulum ATPase (VCP) from Bos taurus (Bovine).